A 305-amino-acid polypeptide reads, in one-letter code: Carbonic anhydrase 5A, mitochondrial (305 aa).

The N-terminal 38 residues, 1–38, are a transit peptide targeting the mitochondrion; the sequence is MLGRNTWKTSAFSFLVEQMWAPLWSRSMRPGRWCSQRS. The 258-residue stretch at 39–296 folds into the Alpha-carbonic anhydrase domain; it reads CAWQTSNNTL…LMNRKVWASF (258 aa). Residues H130, H132, and H155 each contribute to the Zn(2+) site.

Belongs to the alpha-carbonic anhydrase family. Zn(2+) serves as cofactor.

The protein resides in the mitochondrion. It catalyses the reaction hydrogencarbonate + H(+) = CO2 + H2O. With respect to regulation, activated by L- and D-histidine. Activated by L- and D-phenylalanine. Activated by L-adrenaline. Inhibited by coumarins, sulfonamide derivatives such as acetazolamide and Foscarnet (phosphonoformate trisodium salt). Activated by histamine. Mitochondrial carbonic anhydrase that catalyzes the reversible conversion of carbon dioxide to bicarbonate/HCO3. Mitochondria are impermeable to HCO3, and thus this intramitochondrial carbonic anhydrase is pivotal in providing HCO3 for multiple mitochondrial enzymes that catalyze the formation of essential metabolites of intermediary metabolism in the urea and Krebs cycles. In Homo sapiens (Human), this protein is Carbonic anhydrase 5A, mitochondrial.